Consider the following 351-residue polypeptide: MAPVLPLVLPLQPRIRLAQGLWLLSWLLALAGGVILLCSGHLLVQLRHLGTFLAPSCQFPVLPQAALAAGAVALGTGLVGVGASRASLNAALYPPWRGVLGPLLVAGTAGGGGLLVVGLGLALALPGSLDEALEEGLVTALAHYKDTEVPGHCQAKRLVDELQLRYHCCGRHGYKDWFGVQWVSSRYLDPGDRDVADRIQSNVEGLYLTDGVPFSCCNPHSPRPCLQNRLSDSYAHPLFDPRQPNQNLWAQGCHEVLLEHLQDLAGTLGSMLAVTFLLQALVLLGLRYLQTALEGLGGVIDAGGETQGYLFPSGLKDMLKTAWLQGGVACRPAPEEAPPGEAPPKEDLSEA.

Over 1-19 (MAPVLPLVLPLQPRIRLAQ) the chain is Cytoplasmic. Residues 20-44 (GLWLLSWLLALAGGVILLCSGHLLV) form a helical membrane-spanning segment. Over 45 to 64 (QLRHLGTFLAPSCQFPVLPQ) the chain is Lumenal. A helical transmembrane segment spans residues 65–84 (AALAAGAVALGTGLVGVGAS). The Cytoplasmic segment spans residues 85–102 (RASLNAALYPPWRGVLGP). A helical transmembrane segment spans residues 103-125 (LLVAGTAGGGGLLVVGLGLALAL). Residues 126-263 (PGSLDEALEE…HEVLLEHLQD (138 aa)) are Lumenal-facing. A helical membrane pass occupies residues 264–286 (LAGTLGSMLAVTFLLQALVLLGL). Over 287–351 (RYLQTALEGL…APPKEDLSEA (65 aa)) the chain is Cytoplasmic. A disordered region spans residues 331–351 (RPAPEEAPPGEAPPKEDLSEA).

It belongs to the PRPH2/ROM1 family. As to quaternary structure, homodimer; disulfide-linked. Forms a homotetramer. Forms a heterotetramer with PRPH2. Homotetramer and heterotetramer core complexes go on to form higher order complexes by formation of intermolecular disulfide bonds. Interacts with STX3. Interacts with SNAP25. Retina photoreceptors (at protein level). In rim region of ROS disks.

The protein localises to the photoreceptor inner segment membrane. It is found in the photoreceptor outer segment membrane. In terms of biological role, plays a role in rod outer segment (ROS) morphogenesis. May play a role with PRPH2 in the maintenance of the structure of ROS curved disks. Plays a role in the organization of the ROS and maintenance of ROS disk diameter. Involved in the maintenance of the retina outer nuclear layer. The chain is Rod outer segment membrane protein 1 (ROM1) from Homo sapiens (Human).